We begin with the raw amino-acid sequence, 243 residues long: tRNA (guanine-N(1)-)-methyltransferase (243 aa).

S-adenosyl-L-methionine is bound by residues Gly-108 and 127 to 132; that span reads LGDYVL.

The protein belongs to the RNA methyltransferase TrmD family. Homodimer.

The protein localises to the cytoplasm. The enzyme catalyses guanosine(37) in tRNA + S-adenosyl-L-methionine = N(1)-methylguanosine(37) in tRNA + S-adenosyl-L-homocysteine + H(+). Specifically methylates guanosine-37 in various tRNAs. This is tRNA (guanine-N(1)-)-methyltransferase from Streptococcus gordonii (strain Challis / ATCC 35105 / BCRC 15272 / CH1 / DL1 / V288).